Reading from the N-terminus, the 486-residue chain is Adenylate kinase 8 (486 aa).

Adenylate kinase stretches follow at residues 58 to 258 (PRII…NFIC) and 269 to 471 (PRIL…SRLV). Residue 67–72 (ASGKKT) participates in ATP binding. An NMP 1 region spans residues 87–112 (TFCDILKDDSDLTRAAQSYYDKKQNV). Residues 139-142 (AIPK) and arginine 202 each bind AMP. The tract at residues 176 to 205 (GKRIDPVTGDVYHVTFMWPESEEVAQRLET) is LID 1. 278 to 283 (GAGRNL) provides a ligand contact to ATP. The tract at residues 298-327 (CCGELLKAVSADESHMGELIKPYLESEQQV) is NMP 2. AMP-binding positions include 325–327 (QQV) and 354–357 (GFPR). The LID 2 stretch occupies residues 391 to 424 (LRAVDPVTGEWYHSVYKPPPGPEVQARLRFNPQH). Residue arginine 392 coordinates ATP. AMP is bound at residue arginine 432.

The protein belongs to the adenylate kinase family.

Its subcellular location is the cytoplasm. It is found in the cytosol. It catalyses the reaction AMP + ATP = 2 ADP. The enzyme catalyses a 2'-deoxyribonucleoside 5'-diphosphate + ATP = a 2'-deoxyribonucleoside 5'-triphosphate + ADP. The catalysed reaction is a ribonucleoside 5'-diphosphate + ATP = a ribonucleoside 5'-triphosphate + ADP. Functionally, nucleoside monophosphate (NMP) kinase that catalyzes the reversible transfer of the terminal phosphate group between nucleoside triphosphates and monophosphates. Has highest activity toward AMP, and weaker activity toward dAMP, CMP and dCMP. Also displays broad nucleoside diphosphate kinase activity. The protein is Adenylate kinase 8 (ak8) of Danio rerio (Zebrafish).